Consider the following 117-residue polypeptide: Large ribosomal subunit protein bL20c (117 aa).

Belongs to the bacterial ribosomal protein bL20 family.

The protein resides in the plastid. It localises to the chloroplast. In terms of biological role, binds directly to 23S ribosomal RNA and is necessary for the in vitro assembly process of the 50S ribosomal subunit. It is not involved in the protein synthesizing functions of that subunit. The chain is Large ribosomal subunit protein bL20c from Eucalyptus globulus subsp. globulus (Tasmanian blue gum).